Here is a 1072-residue protein sequence, read N- to C-terminus: Serine/threonine-protein kinase 11-interacting protein (1072 aa).

8 LRR repeats span residues S109–Y130, Q132–C152, A164–L185, A187–C209, E210–G231, A233–K254, N255–W276, and E280–T301. Positions D333 to S366 are disordered. Residues S388, S390, and S393 each carry the phosphoserine modification. Over residues M441–L454 the composition is skewed to polar residues. Disordered regions lie at residues M441 to A522 and R741 to P762. Composition is skewed to basic and acidic residues over residues K478–P492 and E501–E510. S757, S761, and S763 each carry phosphoserine. Residues H967–Q993 form a disordered region.

Belongs to the STK11IP family. As to quaternary structure, found in a ternary complex composed of STK11/LKB1, STK11IP and SMAD4. Interacts with SMAD4. Interacts with STK11/LKB1.

It is found in the cytoplasm. Its function is as follows. May regulate STK11/LKB1 function by controlling its subcellular localization. The polypeptide is Serine/threonine-protein kinase 11-interacting protein (Stk11ip) (Mus musculus (Mouse)).